The following is a 148-amino-acid chain: Nucleoside diphosphate kinase A (148 aa).

6 residues coordinate ATP: lysine 9, phenylalanine 57, arginine 85, threonine 91, arginine 102, and asparagine 112. Catalysis depends on histidine 115, which acts as the Pros-phosphohistidine intermediate.

This sequence belongs to the NDK family. It depends on Mg(2+) as a cofactor.

The catalysed reaction is a 2'-deoxyribonucleoside 5'-diphosphate + ATP = a 2'-deoxyribonucleoside 5'-triphosphate + ADP. It catalyses the reaction a ribonucleoside 5'-diphosphate + ATP = a ribonucleoside 5'-triphosphate + ADP. In terms of biological role, major role in the synthesis of nucleoside triphosphates other than ATP. The ATP gamma phosphate is transferred to the NDP beta phosphate via a ping-pong mechanism, using a phosphorylated active-site intermediate. This Flaveria bidentis (Coastal plain yellowtops) protein is Nucleoside diphosphate kinase A.